We begin with the raw amino-acid sequence, 193 residues long: Xanthine phosphoribosyltransferase (193 aa).

Xanthine is bound by residues Leu-20 and Asn-27. 5-phospho-alpha-D-ribose 1-diphosphate is bound at residue 127–131 (AYGNA). Lys-155 is a binding site for xanthine.

This sequence belongs to the purine/pyrimidine phosphoribosyltransferase family. Xpt subfamily. In terms of assembly, homodimer.

Its subcellular location is the cytoplasm. The enzyme catalyses XMP + diphosphate = xanthine + 5-phospho-alpha-D-ribose 1-diphosphate. It functions in the pathway purine metabolism; XMP biosynthesis via salvage pathway; XMP from xanthine: step 1/1. Its function is as follows. Converts the preformed base xanthine, a product of nucleic acid breakdown, to xanthosine 5'-monophosphate (XMP), so it can be reused for RNA or DNA synthesis. This Porphyromonas gingivalis (strain ATCC BAA-308 / W83) protein is Xanthine phosphoribosyltransferase.